The sequence spans 495 residues: GTPase Der (495 aa).

2 consecutive EngA-type G domains span residues 3-166 and 208-381; these read PVVA…VQDE and IKLA…SCAT. Residues 9–16, 56–60, 118–121, 214–221, 261–265, and 326–329 each bind GTP; these read GRPNVGKS, DTGGI, NKTD, DTAGV, and NKWD. Residues 382–466 form the KH-like domain; it reads RRVSTAMLTR…PIRIQFKEGE (85 aa).

This sequence belongs to the TRAFAC class TrmE-Era-EngA-EngB-Septin-like GTPase superfamily. EngA (Der) GTPase family. Associates with the 50S ribosomal subunit.

In terms of biological role, GTPase that plays an essential role in the late steps of ribosome biogenesis. This Pectobacterium atrosepticum (strain SCRI 1043 / ATCC BAA-672) (Erwinia carotovora subsp. atroseptica) protein is GTPase Der.